The chain runs to 268 residues: Tryptophan synthase alpha chain (268 aa).

Active-site proton acceptor residues include glutamate 49 and aspartate 60.

The protein belongs to the TrpA family. As to quaternary structure, tetramer of two alpha and two beta chains.

The enzyme catalyses (1S,2R)-1-C-(indol-3-yl)glycerol 3-phosphate + L-serine = D-glyceraldehyde 3-phosphate + L-tryptophan + H2O. The protein operates within amino-acid biosynthesis; L-tryptophan biosynthesis; L-tryptophan from chorismate: step 5/5. Functionally, the alpha subunit is responsible for the aldol cleavage of indoleglycerol phosphate to indole and glyceraldehyde 3-phosphate. The polypeptide is Tryptophan synthase alpha chain (Aliivibrio fischeri (strain ATCC 700601 / ES114) (Vibrio fischeri)).